A 279-amino-acid chain; its full sequence is DegV domain-containing protein SAR1438 (279 aa).

The DegV domain maps to 4-278 (QIIVTDSTSD…QGAIGLVVLK (275 aa)). Hexadecanoate-binding residues include Thr-61 and Ser-93.

Its function is as follows. May bind long-chain fatty acids, such as palmitate, and may play a role in lipid transport or fatty acid metabolism. In Staphylococcus aureus (strain MRSA252), this protein is DegV domain-containing protein SAR1438.